The following is a 226-amino-acid chain: Purine nucleoside phosphorylase Cj1217c (226 aa).

Zn(2+) contacts are provided by histidine 58, cysteine 93, and histidine 109.

It belongs to the purine nucleoside phosphorylase YfiH/LACC1 family. Homodimer. It depends on Cu(2+) as a cofactor. Zn(2+) serves as cofactor.

It catalyses the reaction adenosine + phosphate = alpha-D-ribose 1-phosphate + adenine. The catalysed reaction is S-methyl-5'-thioadenosine + phosphate = 5-(methylsulfanyl)-alpha-D-ribose 1-phosphate + adenine. The enzyme catalyses inosine + phosphate = alpha-D-ribose 1-phosphate + hypoxanthine. It carries out the reaction adenosine + H2O + H(+) = inosine + NH4(+). In terms of biological role, purine nucleoside enzyme that catalyzes the phosphorolysis of adenosine and inosine nucleosides, yielding D-ribose 1-phosphate and the respective free bases, adenine and hypoxanthine. Also catalyzes the phosphorolysis of S-methyl-5'-thioadenosine into adenine and S-methyl-5-thio-alpha-D-ribose 1-phosphate. Also has adenosine deaminase activity. In Campylobacter jejuni subsp. jejuni serotype O:2 (strain ATCC 700819 / NCTC 11168), this protein is Purine nucleoside phosphorylase Cj1217c.